The following is a 98-amino-acid chain: UPF0213 protein BPUM_0019 (98 aa).

Residues 4 to 79 (HNHYFYVLKC…KTWTRKKKDL (76 aa)) enclose the GIY-YIG domain.

Belongs to the UPF0213 family.

This Bacillus pumilus (strain SAFR-032) protein is UPF0213 protein BPUM_0019.